The chain runs to 415 residues: Levansucrase (415 aa).

Trp45, Asp46, Ala132, Arg202, and Asp203 together coordinate sucrose. The active-site Nucleophile is the Asp46. The active-site Proton donor/acceptor is the Glu287.

The protein belongs to the glycosyl hydrolase 68 family.

The catalysed reaction is [6)-beta-D-fructofuranosyl-(2-&gt;](n) alpha-D-glucopyranoside + sucrose = [6)-beta-D-fructofuranosyl-(2-&gt;](n+1) alpha-D-glucopyranoside + D-glucose. Functionally, catalyzes the synthesis of levan, a fructose polymer, by transferring the fructosyl moiety from sucrose to a growing acceptor molecule. This is Levansucrase from Rahnella aquatilis (strain ATCC 33071 / DSM 4594 / JCM 1683 / NBRC 105701 / NCIMB 13365 / CIP 78.65).